A 424-amino-acid polypeptide reads, in one-letter code: MAQYIKQGKSESELKDSHGKVEQTVASLIARIEKEGETAVRELSRQFDNWDPEQFRLSAEEIEKIVRSVPDQVKADICFAQEQIRHFAEQQRASIQDIEVETRPGVFLGHKNIPVNSVGCYIPGGRYPMVASSHMSILTAKVAGVKRVIGCTPPINGEIPAATVTAMHFAGADEIYILGGVQAMTAMAVGTETIEAVDMLVGPGNAFVAEAKRQLFGRVGIDLFAGPTEVLIIADDTADGEMVATDLLGQAEHGPTSPAALITTSKKLAEETVAEIERQLQTLPTADVAKVAWEEHGMIILVDDLAEAVVEADKLAYEHVQVLTENPNYFLDHMTNYGALFLGPETNVAYGDKVIGTNHTLPTKKAAKYTGGLWVGKFLKNCTYQRCTPEASAEIGRIAERLCELEGFIGHKAQASLRVKRYGK.

Gln-250 and His-253 together coordinate Zn(2+). Active-site proton acceptor residues include Glu-318 and His-319. The Zn(2+) site is built by Asp-352 and His-411.

The protein belongs to the histidinol dehydrogenase family. The cofactor is Zn(2+).

This Shouchella clausii (strain KSM-K16) (Alkalihalobacillus clausii) protein is Histidinol dehydrogenase homolog.